The chain runs to 238 residues: MERFALWFIFLAGSLAQEDLVGNVFLFPKPSVTTYAILKPEVEKPLKNLTVCLRSYTTLTRFHSLLSLATSNPLQDNAFLLFSKPPNQCSIYINQEENVFKVDPTAVEWKHTCVSWDSVSGVVELWIDGKLYPRTVSKKASSIGFPSSIIQGQEQDSFGGGFNIDQSFVGEISDVHMWDYVLTPDHIQKVLFANMDFNGNIISWRSLQYELRGQATTQPKRQCKTLEHHYGLFAKCYK.

The signal sequence occupies residues 1–16 (MERFALWFIFLAGSLA). Gln-17 bears the Pyrrolidone carboxylic acid mark. The 203-residue stretch at 21 to 223 (VGNVFLFPKP…QATTQPKRQC (203 aa)) folds into the Pentraxin (PTX) domain. Residues Cys-52 and Cys-113 are joined by a disulfide bond. Ca(2+) contacts are provided by Asp-76, Asn-77, Glu-154, Gln-155, Asp-156, and Gln-166.

The protein belongs to the pentraxin family. As to quaternary structure, homodimer; disulfide-linked. It is not known if it assembles into a pentraxin (or pentaxin) structure. Pentaxins have a discoid arrangement of 5 non-covalently bound subunits. The cofactor is Ca(2+). Cys-89 or Cys-223 or Cys-236 could be involved in interchain disulfide linkage.

Its subcellular location is the secreted. Displays several functions associated with host defense: it promotes agglutination, bacterial capsular swelling, phagocytosis, and complement fixation through its calcium-dependent binding to phosphorylcholine. The protein is C-reactive protein (crp) of Xenopus laevis (African clawed frog).